We begin with the raw amino-acid sequence, 202 residues long: Dephospho-CoA kinase (202 aa).

The DPCK domain occupies 5 to 202 (ILGLTGGIGS…FYLTLRGGQP (198 aa)). Residue 13 to 18 (GSGKSA) coordinates ATP.

Belongs to the CoaE family.

It localises to the cytoplasm. It catalyses the reaction 3'-dephospho-CoA + ATP = ADP + CoA + H(+). It functions in the pathway cofactor biosynthesis; coenzyme A biosynthesis; CoA from (R)-pantothenate: step 5/5. Catalyzes the phosphorylation of the 3'-hydroxyl group of dephosphocoenzyme A to form coenzyme A. This Stutzerimonas stutzeri (Pseudomonas stutzeri) protein is Dephospho-CoA kinase.